Reading from the N-terminus, the 511-residue chain is Coatomer subunit delta (511 aa).

Residues 168 to 177 (QARRDAERQG) show a composition bias toward basic and acidic residues. The interval 168–188 (QARRDAERQGKKAPGFGGFGS) is disordered. Residue Ser223 is modified to Phosphoserine. 2 positions are modified to N6-acetyllysine: Lys233 and Lys241. Position 244 is a phosphoserine (Ser244). Positions 271–511 (MESVHMKIEE…TFLVDKYEIL (241 aa)) constitute an MHD domain. N6-acetyllysine is present on residues Lys309 and Lys351. At Ser493 the chain carries Phosphoserine.

It belongs to the adaptor complexes medium subunit family. Delta-COP subfamily. As to quaternary structure, oligomeric complex that consists of at least the alpha, beta, beta', gamma, delta, epsilon and zeta subunits.

It localises to the cytoplasm. The protein resides in the golgi apparatus membrane. The protein localises to the cytoplasmic vesicle. Its subcellular location is the COPI-coated vesicle membrane. Functionally, the coatomer is a cytosolic protein complex that binds to dilysine motifs and reversibly associates with Golgi non-clathrin-coated vesicles, which further mediate biosynthetic protein transport from the ER, via the Golgi up to the trans Golgi network. Coatomer complex is required for budding from Golgi membranes, and is essential for the retrograde Golgi-to-ER transport of dilysine-tagged proteins. In mammals, the coatomer can only be recruited by membranes associated to ADP-ribosylation factors (ARFs), which are small GTP-binding proteins; the complex also influences the Golgi structural integrity, as well as the processing, activity, and endocytic recycling of LDL receptors. The sequence is that of Coatomer subunit delta (Arcn1) from Rattus norvegicus (Rat).